The chain runs to 561 residues: Oxygen-dependent choline dehydrogenase (561 aa).

7–36 contacts FAD; it reads DYIIVGAGSAGNVLASRLTEDADVTVLLLE. The active-site Proton acceptor is His-474.

Belongs to the GMC oxidoreductase family. FAD is required as a cofactor.

It catalyses the reaction choline + A = betaine aldehyde + AH2. The catalysed reaction is betaine aldehyde + NAD(+) + H2O = glycine betaine + NADH + 2 H(+). It participates in amine and polyamine biosynthesis; betaine biosynthesis via choline pathway; betaine aldehyde from choline (cytochrome c reductase route): step 1/1. In terms of biological role, involved in the biosynthesis of the osmoprotectant glycine betaine. Catalyzes the oxidation of choline to betaine aldehyde and betaine aldehyde to glycine betaine at the same rate. This is Oxygen-dependent choline dehydrogenase from Paraburkholderia phytofirmans (strain DSM 17436 / LMG 22146 / PsJN) (Burkholderia phytofirmans).